Consider the following 141-residue polypeptide: Drosulfakinins (141 aa).

An N-terminal signal peptide occupies residues 1–33; sequence MGLRSCTHLATLFMTLWALAFCFLVVVPIPAQT. The propeptide occupies 34 to 73; sequence TSLQNAKDDRRLQELESKIGAESDQPNANLVGPSFSRFGD. The tract at residues 51–72 is disordered; that stretch reads KIGAESDQPNANLVGPSFSRFG. At Phe82 the chain carries Phenylalanine amide. Positions 86–111 are excised as a propeptide; the sequence is VPLISRPMIPIELDLLMDNDDERTKA. At Tyr117 the chain carries Sulfotyrosine. A Phenylalanine amide modification is found at Phe122. Tyr134 carries the post-translational modification Sulfotyrosine. Phe139 is subject to Phenylalanine amide.

It belongs to the gastrin/cholecystokinin family.

It is found in the secreted. Drosulfakinin-0 (DSK 0) plays diverse biological roles including regulating gut muscle contraction in adults but not in larvae. This Drosophila mauritiana (Fruit fly) protein is Drosulfakinins.